Reading from the N-terminus, the 208-residue chain is Mitochondrial import inner membrane translocase subunit Tim23 (208 aa).

3 helical membrane-spanning segments follow: residues 73-93, 125-145, and 173-193; these read FELAFFTIGGCCITGAAFGTL, ASWANTLGSVALLYSVFGVAI, and GLKGVARGGLIGLAMSGLYAL.

It belongs to the Tim17/Tim22/Tim23 family. Component of the TIM23 complex at least composed of timm23, timm17 and timm50. The complex interacts with the timm44 component of the PAM complex.

It localises to the mitochondrion inner membrane. Essential component of the TIM23 complex, a complex that mediates the translocation of transit peptide-containing proteins across the mitochondrial inner membrane. Plays an essential role in early embryonic development. This is Mitochondrial import inner membrane translocase subunit Tim23 (timm23) from Danio rerio (Zebrafish).